Reading from the N-terminus, the 451-residue chain is Ribonuclease J (451 aa).

Zn(2+)-binding residues include His84, His86, Asp88, His89, His155, and Asp177. 384–388 lines the substrate pocket; it reads HVSGH. His410 is a binding site for Zn(2+).

Belongs to the metallo-beta-lactamase superfamily. RNA-metabolizing metallo-beta-lactamase-like family. Archaeal RNase J subfamily. As to quaternary structure, homodimer. It depends on Zn(2+) as a cofactor.

The protein resides in the cytoplasm. Inhibited by 1,10-phenanthroline. In terms of biological role, a highly processive 5'-3' exoribonuclease; no evidence has been seen for endonuclease activity. Prefers 5'-phosphate or 5'-hydroxyl ends; 5'-triphosphate substrates are very poorly degraded, does not degrade circular RNA. Does not degrade pre-tRNA(Trp) suggesting it is inhibited by strong secondary structures. Also degrades ssNDA but not dsDNA. This Pyrococcus abyssi (strain GE5 / Orsay) protein is Ribonuclease J.